The following is a 122-amino-acid chain: Sperm-egg fusion protein LLCFC1 (122 aa).

The signal sequence occupies residues 1 to 28; sequence MPPLAPQLCRAVFLVPILLLLQVKPLNG. A disordered region spans residues 27-51; the sequence is NGSPGPKDGSQTEKTPSADQNQEQF. The span at 38-49 shows a compositional bias: polar residues; the sequence is TEKTPSADQNQE.

Its subcellular location is the secreted. Sperm protein required for fusion of sperm with the egg membrane during fertilization. This chain is Sperm-egg fusion protein LLCFC1, found in Homo sapiens (Human).